A 355-amino-acid chain; its full sequence is SH3 domain-containing protein Dlish (355 aa).

SH3 domains lie at 57–117 (SPDS…PCNT), 183–243 (EPSG…PADS), and 287–352 (YHGT…PPAM).

Interacts with dachs (via C-terminus); the interaction is direct. Interacts (via N-terminus including SH3 domain 1) with palmitoyltransferase app; this leads to palmitoylation of Dlish by app. Also interacts with dco, ft, ft-regulated E3 ubiquitin ligase Fbxl7, F-box protein slmb and SCF E3 ubiquitin-protein ligase complex component Cul1. Palmitoylated by app.

It is found in the cytoplasm. The protein resides in the cell cortex. In terms of biological role, required for the apical cell cortex localization, total cellular level and full activity of dachs. The chain is SH3 domain-containing protein Dlish from Drosophila melanogaster (Fruit fly).